We begin with the raw amino-acid sequence, 591 residues long: Ketol-acid reductoisomerase, chloroplastic (591 aa).

Positions 1–20 are disordered; that stretch reads MAAATSSIAPSLSCPSPSSS. A chloroplast-targeting transit peptide spans 1–52; it reads MAAATSSIAPSLSCPSPSSSSKTLWSSKARTLALPNIGFLSSSSKSLRSLTA. Residue Thr53 is modified to N-acetylthreonine. The region spanning 102–300 is the KARI N-terminal Rossmann domain; sequence VRGGRDLFKH…ALGSPFTFAT (199 aa). Residues 123–130, 156–161, and 195–199 each bind NADP(+); these read GVIGWGSQ, RKGSRS, and SDAAQ. His220 is an active-site residue. 2 KARI C-terminal knotted domains span residues 301–449 and 450–586; these read TLEQ…RPAG and DLGP…RPEL. Mg(2+) is bound by residues Asp309, Glu313, Glu486, and Glu490. Ser512 is a binding site for substrate.

Belongs to the ketol-acid reductoisomerase family. As to quaternary structure, homodimer. Mg(2+) is required as a cofactor.

Its subcellular location is the plastid. The protein localises to the chloroplast. The catalysed reaction is (2R)-2,3-dihydroxy-3-methylbutanoate + NADP(+) = (2S)-2-acetolactate + NADPH + H(+). The enzyme catalyses (2R,3R)-2,3-dihydroxy-3-methylpentanoate + NADP(+) = (S)-2-ethyl-2-hydroxy-3-oxobutanoate + NADPH + H(+). The protein operates within amino-acid biosynthesis; L-isoleucine biosynthesis; L-isoleucine from 2-oxobutanoate: step 2/4. It functions in the pathway amino-acid biosynthesis; L-valine biosynthesis; L-valine from pyruvate: step 2/4. The chain is Ketol-acid reductoisomerase, chloroplastic from Arabidopsis thaliana (Mouse-ear cress).